We begin with the raw amino-acid sequence, 412 residues long: Phosphoribosylamine--glycine ligase (412 aa).

Positions 108-309 constitute an ATP-grasp domain; that stretch reads KSIMKKYGVP…LAQAIIDILA (202 aa). 134–190 lines the ATP pocket; that stretch reads LDEKGVPLVIKADGLAAGKGVTVAFDIETAKSALADIFSGSQGKVVIEEFLDGEEFS. Mg(2+)-binding residues include Glu-279 and Asn-281.

The protein belongs to the GARS family. Requires Mg(2+) as cofactor. Mn(2+) serves as cofactor.

It catalyses the reaction 5-phospho-beta-D-ribosylamine + glycine + ATP = N(1)-(5-phospho-beta-D-ribosyl)glycinamide + ADP + phosphate + H(+). It functions in the pathway purine metabolism; IMP biosynthesis via de novo pathway; N(1)-(5-phospho-D-ribosyl)glycinamide from 5-phospho-alpha-D-ribose 1-diphosphate: step 2/2. The protein is Phosphoribosylamine--glycine ligase of Lactococcus lactis subsp. lactis (strain IL1403) (Streptococcus lactis).